A 139-amino-acid polypeptide reads, in one-letter code: Putative nickel-responsive regulator (139 aa).

Residues His-79, His-90, His-92, and Cys-98 each coordinate Ni(2+).

The protein belongs to the transcriptional regulatory CopG/NikR family. It depends on Ni(2+) as a cofactor.

Functionally, transcriptional regulator. In Nitratidesulfovibrio vulgaris (strain DSM 19637 / Miyazaki F) (Desulfovibrio vulgaris), this protein is Putative nickel-responsive regulator.